The chain runs to 196 residues: MNNDLIAKAAIDRRMAEIITPVIEDMGFELVRVRLMSGKSTILQIMADRPDGGIEVDDCAEISQAVSAVLDVEDPILDEYTLEVSSPGIDRPLTRLKDFEMFEGYEAKIETGDMVDGRRRFKGALAGVEDDEVLINIEEGTIGLKFDWLSDAKLVLTDDLIKEMLRQRKAAGALDETNFDEVSTELETDTPSEGDQ.

Residues 176–196 (ETNFDEVSTELETDTPSEGDQ) form a disordered region. Positions 177-196 (TNFDEVSTELETDTPSEGDQ) are enriched in acidic residues.

The protein belongs to the RimP family.

The protein localises to the cytoplasm. Its function is as follows. Required for maturation of 30S ribosomal subunits. In Roseobacter denitrificans (strain ATCC 33942 / OCh 114) (Erythrobacter sp. (strain OCh 114)), this protein is Ribosome maturation factor RimP.